We begin with the raw amino-acid sequence, 213 residues long: Leucyl/phenylalanyl-tRNA--protein transferase (213 aa).

The protein belongs to the L/F-transferase family.

The protein resides in the cytoplasm. It catalyses the reaction N-terminal L-lysyl-[protein] + L-leucyl-tRNA(Leu) = N-terminal L-leucyl-L-lysyl-[protein] + tRNA(Leu) + H(+). The enzyme catalyses N-terminal L-arginyl-[protein] + L-leucyl-tRNA(Leu) = N-terminal L-leucyl-L-arginyl-[protein] + tRNA(Leu) + H(+). It carries out the reaction L-phenylalanyl-tRNA(Phe) + an N-terminal L-alpha-aminoacyl-[protein] = an N-terminal L-phenylalanyl-L-alpha-aminoacyl-[protein] + tRNA(Phe). Its function is as follows. Functions in the N-end rule pathway of protein degradation where it conjugates Leu, Phe and, less efficiently, Met from aminoacyl-tRNAs to the N-termini of proteins containing an N-terminal arginine or lysine. In Rhodospirillum rubrum (strain ATCC 11170 / ATH 1.1.1 / DSM 467 / LMG 4362 / NCIMB 8255 / S1), this protein is Leucyl/phenylalanyl-tRNA--protein transferase.